Reading from the N-terminus, the 184-residue chain is Glucosamine 6-phosphate N-acetyltransferase (184 aa).

The N-acetyltransferase domain occupies 39–184; it reads LVLRPLCTAD…ENYMCRRFLK (146 aa). Residues threonine 61, 108–111, and 120–122 contribute to the substrate site; these read KFIH and EDV. 130-135 provides a ligand contact to acetyl-CoA; sequence GKQLGK. Residue 151 to 152 coordinates substrate; the sequence is YK. 165-167 serves as a coordination point for acetyl-CoA; it reads YKK. Residues glutamate 175 and arginine 181 each coordinate substrate.

This sequence belongs to the acetyltransferase family. GNA1 subfamily. In terms of assembly, homodimer. As to expression, ubiquitous. Shows a strong differential expression pattern in adult hematopoietic precursor cells.

It is found in the golgi apparatus membrane. The protein resides in the endosome membrane. The enzyme catalyses D-glucosamine 6-phosphate + acetyl-CoA = N-acetyl-D-glucosamine 6-phosphate + CoA + H(+). Its pathway is nucleotide-sugar biosynthesis; UDP-N-acetyl-alpha-D-glucosamine biosynthesis; N-acetyl-alpha-D-glucosamine 1-phosphate from alpha-D-glucosamine 6-phosphate (route I): step 1/2. The chain is Glucosamine 6-phosphate N-acetyltransferase (Gnpnat1) from Mus musculus (Mouse).